Reading from the N-terminus, the 578-residue chain is Poly(A) RNA polymerase cid13 (578 aa).

Asp110 and Asp112 together coordinate Mg(2+). Residues 275–330 (SLGILFVEFFRFFGYLFDYEHFVLSIRHGTFLSKRAKGWQFQLNNFLCVEEPFHTS) enclose the PAP-associated domain. A disordered region spans residues 495–565 (SHHFDERHGG…SEVVSPVSLH (71 aa)). Residues 496–510 (HHFDERHGGDRHEKN) are compositionally biased toward basic and acidic residues. The segment covering 516-527 (RYSRNKFHKKKQ) has biased composition (basic residues). Over residues 547–565 (NSPPSNSSSSEVVSPVSLH) the composition is skewed to low complexity.

This sequence belongs to the DNA polymerase type-B-like family. As to quaternary structure, interacts with pab1. The cofactor is Mg(2+). It depends on Mn(2+) as a cofactor.

The protein resides in the cytoplasm. The protein localises to the nucleus. It catalyses the reaction RNA(n) + ATP = RNA(n)-3'-adenine ribonucleotide + diphosphate. In terms of biological role, polymerase that creates the 3' poly(A) tail of suc22 mRNA. The polypeptide is Poly(A) RNA polymerase cid13 (cid13) (Schizosaccharomyces pombe (strain 972 / ATCC 24843) (Fission yeast)).